The chain runs to 194 residues: Protein PHLOEM PROTEIN 2-LIKE A2 (194 aa).

The helical transmembrane segment at 49–71 (VTFVFFCFFKISLNSAYLYTLYS) threads the bilayer.

In terms of tissue distribution, vascular tissues, specifically in phloem companion cell-sieve element complexes.

The protein localises to the membrane. The chain is Protein PHLOEM PROTEIN 2-LIKE A2 (PP2A2) from Arabidopsis thaliana (Mouse-ear cress).